A 301-amino-acid chain; its full sequence is Helicase VP6-A (301 aa).

Disordered regions lie at residues 1–99 (MIDW…TTGT) and 163–208 (RRKE…TSVG). Composition is skewed to basic and acidic residues over residues 8–30 (ESGKGDKVEPKEENEAEESKDGE), 37–55 (GQKKESSKEAEDADVDRRV), and 67–81 (GFRERANENVDRGDG). Position 82 (K82) interacts with ATP. Basic and acidic residues-rich tracts occupy residues 163–177 (RRKEKSETHARVAEK) and 186–202 (VHGDAQKESTEDEKTPE).

The protein belongs to the orbivirus VP6 family. In terms of assembly, homohexamer.

It localises to the virion. The catalysed reaction is ATP + H2O = ADP + phosphate + H(+). In terms of biological role, ATP dependent RNA helicase essential for RNA packaging and viral transcription. Possesses ss- and dsRNA-binding capacity. This chain is Helicase VP6-A (Segment-9), found in Bluetongue virus 2 (isolate USA) (BTV 2).